Reading from the N-terminus, the 381-residue chain is MAMSRVASTAARAITSPSSLVFTRELQASPGPKKIVGVFYKANEYAEMNPNFLGCAENALGIREWLESKGHQYIVTPDKEGPDCELEKHIPDLHVLISTPFHPAYVTAERIKKAKNLQLLLTAGIGSDHVDLKAAAAAGLTVAEVTGSNTVSVAEDELMRILILVRNFLPGHHQVINGEWNVAAIAHRAYDLEGKTVGTVGAGRIGRLLLQRLKPFNCNLLYHDRLKMDSELENQIGAKFEEDLDKMLSKCDIVVINTPLTEKTKGMFDKERIAKLKKGVLIVNNARGAIMDTQAVVDACNSGHIAGYSGDVWYPQPAPKDHPWRYMPNQAMTPHISGTTIDAQLRYAAGTKDMLDRYFKGEDFPAENYIVKDGELAPQYR.

A mitochondrion-targeting transit peptide spans Met-1 to Glu-25. Residues Ile-125 and Asn-149 each coordinate substrate. NAD(+) is bound by residues Thr-150, Arg-204–Ile-205, Asp-224, Pro-259–Lys-263, Asn-285, Asp-311, and His-335–Gly-338.

This sequence belongs to the D-isomer specific 2-hydroxyacid dehydrogenase family. FDH subfamily. In terms of assembly, homodimer. As to expression, found at high levels in developing tubers, at intermediate level in stems, veins, stolons, and stamens, and at low level in leaves and roots.

The protein resides in the mitochondrion. It carries out the reaction formate + NAD(+) = CO2 + NADH. Catalyzes the NAD(+)-dependent oxidation of formate to carbon dioxide. Involved in the cell stress response. Involved in formate-dependent oxygen uptake coupled to ATP synthesis. The protein is Formate dehydrogenase, mitochondrial of Solanum tuberosum (Potato).